A 479-amino-acid polypeptide reads, in one-letter code: Chromosomal replication initiator protein DnaA (479 aa).

Residues 1–94 form a domain I, interacts with DnaA modulators region; sequence MKGGTMVENA…QTLWRTERED (94 aa). The interval 94 to 142 is domain II; sequence DIKGVELQVKRGLPEVSMGDAEDGEDGSGEGHELATQAAAPESRSDLAV. A disordered region spans residues 106 to 137; sequence LPEVSMGDAEDGEDGSGEGHELATQAAAPESR. Residues 143–359 are domain III, AAA+ region; that stretch reads PLDPRFTFDT…GALNRLIAHA (217 aa). Residues Gly188, Gly190, Lys191, and Thr192 each coordinate ATP. The segment at 360-479 is domain IV, binds dsDNA; it reads DLVGRPVTLD…VELLRRMLEG (120 aa).

It belongs to the DnaA family. In terms of assembly, oligomerizes as a right-handed, spiral filament on DNA at oriC.

The protein resides in the cytoplasm. Plays an essential role in the initiation and regulation of chromosomal replication. ATP-DnaA binds to the origin of replication (oriC) to initiate formation of the DNA replication initiation complex once per cell cycle. Binds the DnaA box (a 9 base pair repeat at the origin) and separates the double-stranded (ds)DNA. Forms a right-handed helical filament on oriC DNA; dsDNA binds to the exterior of the filament while single-stranded (ss)DNA is stabiized in the filament's interior. The ATP-DnaA-oriC complex binds and stabilizes one strand of the AT-rich DNA unwinding element (DUE), permitting loading of DNA polymerase. After initiation quickly degrades to an ADP-DnaA complex that is not apt for DNA replication. Binds acidic phospholipids. The protein is Chromosomal replication initiator protein DnaA of Gluconobacter oxydans (strain 621H) (Gluconobacter suboxydans).